The primary structure comprises 259 residues: Polycomb group RING finger protein 1 (259 aa).

The RING-type zinc finger occupies 45–84 (CYLCAGYFIDATTITECLHTFCKSCIVKYLQTSKYCPLCN).

Component of a PRC1-like complex.

It is found in the nucleus. Functionally, component of a Polycomb group (PcG) multiprotein PRC1-like complex, a complex class required to maintain the transcriptionally repressive state of many genes, including Hox genes, throughout development. PcG PRC1 complex acts via chromatin remodeling and modification of histones; it mediates monoubiquitination of histone H2A 'Lys-119', rendering chromatin heritably changed in its expressibility. The protein is Polycomb group RING finger protein 1 (pcgf1) of Xenopus laevis (African clawed frog).